We begin with the raw amino-acid sequence, 187 residues long: Aspartic protease inhibitor 9 (187 aa).

N-linked (GlcNAc...) asparagine glycosylation occurs at Asn-19. Disulfide bonds link Cys-48/Cys-93 and Cys-142/Cys-158.

Belongs to the protease inhibitor I3 (leguminous Kunitz-type inhibitor) family. Post-translationally, glycosylated. As to expression, tubers.

The protein resides in the vacuole. Functionally, inhibitor of cathepsin D (aspartic protease) and trypsin (serine protease). May protect the plant by inhibiting proteases of invading organisms. In Solanum tuberosum (Potato), this protein is Aspartic protease inhibitor 9.